Here is a 223-residue protein sequence, read N- to C-terminus: 2-phospho-L-lactate guanylyltransferase (223 aa).

This sequence belongs to the CofC family. As to quaternary structure, homodimer.

The enzyme catalyses (2S)-2-phospholactate + GTP + H(+) = (2S)-lactyl-2-diphospho-5'-guanosine + diphosphate. The protein operates within cofactor biosynthesis; coenzyme F420 biosynthesis. Functionally, guanylyltransferase that catalyzes the activation of (2S)-2-phospholactate (2-PL) as (2S)-lactyl-2-diphospho-5'-guanosine, via the condensation of 2-PL with GTP. It is involved in the biosynthesis of coenzyme F420, a hydride carrier cofactor. The polypeptide is 2-phospho-L-lactate guanylyltransferase (Methanothermobacter thermautotrophicus (strain ATCC 29096 / DSM 1053 / JCM 10044 / NBRC 100330 / Delta H) (Methanobacterium thermoautotrophicum)).